An 89-amino-acid polypeptide reads, in one-letter code: Small ribosomal subunit protein uS17 (89 aa).

It belongs to the universal ribosomal protein uS17 family. As to quaternary structure, part of the 30S ribosomal subunit.

One of the primary rRNA binding proteins, it binds specifically to the 5'-end of 16S ribosomal RNA. This Xylella fastidiosa (strain Temecula1 / ATCC 700964) protein is Small ribosomal subunit protein uS17.